A 270-amino-acid chain; its full sequence is uncharacterized protein (270 aa).

A run of 10 helical transmembrane segments spans residues 12 to 32 (AAIVLSAVLMGTVSVFVRNVG), 35 to 55 (TLSVTFLRLFFGFLAVLPFCL), 64 to 84 (TLLGLAVFNFLTVASYIAAIQ), 88 to 108 (VAMAALLLYMAPVYVIPLSVL), 117 to 137 (TLLALPLGLIGLYLMLTPYAE), 138 to 158 (LTFGIIFGIVSGLSYAIVFVL), 171 to 191 (ITFYNLGLGSAALLPYFLMFG), 194 to 214 (GSWLWAIGLGVVPTAVPFVLF), 226 to 246 (APILALIEPLCAGLVGYFYFG), and 248 to 268 (TLTLTQLIGGAMILAGVLIAW). EamA domains follow at residues 19 to 133 (VLMG…LMLT) and 150 to 269 (LSYA…IAWR).

This sequence belongs to the EamA transporter family.

It is found in the cell membrane. This is an uncharacterized protein from Archaeoglobus fulgidus (strain ATCC 49558 / DSM 4304 / JCM 9628 / NBRC 100126 / VC-16).